A 241-amino-acid chain; its full sequence is Ubiquinone biosynthesis O-methyltransferase (241 aa).

Residues arginine 44, glycine 63, aspartate 84, and methionine 128 each coordinate S-adenosyl-L-methionine.

This sequence belongs to the methyltransferase superfamily. UbiG/COQ3 family.

It catalyses the reaction a 3-demethylubiquinol + S-adenosyl-L-methionine = a ubiquinol + S-adenosyl-L-homocysteine + H(+). The catalysed reaction is a 3-(all-trans-polyprenyl)benzene-1,2-diol + S-adenosyl-L-methionine = a 2-methoxy-6-(all-trans-polyprenyl)phenol + S-adenosyl-L-homocysteine + H(+). It functions in the pathway cofactor biosynthesis; ubiquinone biosynthesis. O-methyltransferase that catalyzes the 2 O-methylation steps in the ubiquinone biosynthetic pathway. In Hydrogenovibrio crunogenus (strain DSM 25203 / XCL-2) (Thiomicrospira crunogena), this protein is Ubiquinone biosynthesis O-methyltransferase.